We begin with the raw amino-acid sequence, 303 residues long: Digeranylgeranylglyceryl phosphate synthase (303 aa).

Transmembrane regions (helical) follow at residues 23–43 (VLGV…AAIA), 88–108 (LALA…PLTG), 130–150 (LPGN…GSLA), 164–184 (TIPI…VKGV), 206–228 (FALR…AAPL), 232–254 (GYAF…AACL), and 272–292 (VAMF…PVFY).

The protein belongs to the UbiA prenyltransferase family. DGGGP synthase subfamily. Requires Mg(2+) as cofactor.

It localises to the cell membrane. It carries out the reaction sn-3-O-(geranylgeranyl)glycerol 1-phosphate + (2E,6E,10E)-geranylgeranyl diphosphate = 2,3-bis-O-(geranylgeranyl)-sn-glycerol 1-phosphate + diphosphate. It functions in the pathway membrane lipid metabolism; glycerophospholipid metabolism. Prenyltransferase that catalyzes the transfer of the geranylgeranyl moiety of geranylgeranyl diphosphate (GGPP) to the C2 hydroxyl of (S)-3-O-geranylgeranylglyceryl phosphate (GGGP). This reaction is the second ether-bond-formation step in the biosynthesis of archaeal membrane lipids. The polypeptide is Digeranylgeranylglyceryl phosphate synthase (Ignicoccus hospitalis (strain KIN4/I / DSM 18386 / JCM 14125)).